Reading from the N-terminus, the 252-residue chain is Protein GrpE (252 aa).

The span at 1-22 shows a compositional bias: polar residues; it reads MHNPQSRGHNLSQAMSDQTVTN. The segment at 1–70 is disordered; that stretch reads MHNPQSRGHN…EEDQASEATS (70 aa).

Belongs to the GrpE family. Homodimer.

It localises to the cytoplasm. In terms of biological role, participates actively in the response to hyperosmotic and heat shock by preventing the aggregation of stress-denatured proteins, in association with DnaK and GrpE. It is the nucleotide exchange factor for DnaK and may function as a thermosensor. Unfolded proteins bind initially to DnaJ; upon interaction with the DnaJ-bound protein, DnaK hydrolyzes its bound ATP, resulting in the formation of a stable complex. GrpE releases ADP from DnaK; ATP binding to DnaK triggers the release of the substrate protein, thus completing the reaction cycle. Several rounds of ATP-dependent interactions between DnaJ, DnaK and GrpE are required for fully efficient folding. The sequence is that of Protein GrpE from Thermosynechococcus vestitus (strain NIES-2133 / IAM M-273 / BP-1).